The primary structure comprises 148 residues: Large ribosomal subunit protein bL9 (148 aa).

This sequence belongs to the bacterial ribosomal protein bL9 family.

Its function is as follows. Binds to the 23S rRNA. This is Large ribosomal subunit protein bL9 from Caldicellulosiruptor saccharolyticus (strain ATCC 43494 / DSM 8903 / Tp8T 6331).